The following is a 713-amino-acid chain: Signal transducer and activator of transcription 1 (713 aa).

Residues 477-574 form the SH2 domain; the sequence is WCIGFISKHD…EEMLRYFESE (98 aa).

It belongs to the transcription factor STAT family. In terms of assembly, forms a homodimer or a heterodimer with a related family member.

It localises to the cytoplasm. The protein resides in the nucleus. Carries out a dual function: signal transduction and activation of transcription. Activated STAT proteins play a role in repression of dauer formation. Neuronal expression is held in check by negative signals through the TGF-beta pathway that target the daf-3 transcription factor. This is Signal transducer and activator of transcription 1 from Caenorhabditis briggsae.